The primary structure comprises 158 residues: NKG2-F type II integral membrane protein (158 aa).

A compositionally biased stretch (polar residues) spans 1–12 (MNKQRGTYSEVS). Positions 1–25 (MNKQRGTYSEVSLAQDPKRQQRKLK) are disordered. The Cytoplasmic segment spans residues 1–74 (MNKQRGTYSE…LPPPEKLTAE (74 aa)). A helical; Signal-anchor for type II membrane protein transmembrane segment spans residues 75–95 (VLGIICIVLMATVLKTIVLIP). Topologically, residues 96 to 158 (CIGVLEQNNF…VLRRTLICFL (63 aa)) are extracellular.

Can form disulfide-bonded heterodimer with CD94. As to expression, natural killer cells.

The protein localises to the membrane. In terms of biological role, may play a role as a receptor for the recognition of MHC class I HLA-E molecules by NK cells. This Homo sapiens (Human) protein is NKG2-F type II integral membrane protein (KLRC4).